A 548-amino-acid polypeptide reads, in one-letter code: Probable delta-1-pyrroline-5-carboxylate dehydrogenase (548 aa).

The active-site Proton acceptor is Glu-298. The active-site Nucleophile is the Cys-332. Phosphoserine is present on residues Ser-391, Ser-394, and Ser-396.

This sequence belongs to the aldehyde dehydrogenase family.

It catalyses the reaction L-glutamate 5-semialdehyde + NAD(+) + H2O = L-glutamate + NADH + 2 H(+). Its pathway is amino-acid degradation; L-proline degradation into L-glutamate; L-glutamate from L-proline: step 2/2. The polypeptide is Probable delta-1-pyrroline-5-carboxylate dehydrogenase (Schizosaccharomyces pombe (strain 972 / ATCC 24843) (Fission yeast)).